The chain runs to 2153 residues: RNA-directed RNA polymerase L (2153 aa).

Mn(2+) is bound by residues histidine 36, glutamate 54, aspartate 97, glutamate 110, and valine 111. Residue lysine 124 is the For endonuclease activity of the active site. The region spanning 957-1143 (TGNVIKFKRR…AVNQEMWKSM (187 aa)) is the RdRp catalytic domain. Residue aspartate 1100 participates in Mg(2+) binding. An interaction with the viral nucleoprotein region spans residues 1291–2153 (KQAFYSYKHT…FPHDPVSSFY (863 aa)).

Belongs to the Bunyavirales RNA polymerase family. As to quaternary structure, interacts with the viral nucleoprotein; this interaction is required for RdRp function. Mn(2+) is required as a cofactor. The cofactor is Mg(2+).

It localises to the host cytoplasm. The protein resides in the host perinuclear region. The enzyme catalyses RNA(n) + a ribonucleoside 5'-triphosphate = RNA(n+1) + diphosphate. RNA-dependent RNA polymerase, which is responsible for the replication and transcription of the viral RNA genome using antigenomic RNA as an intermediate. During transcription, synthesizes subgenomic RNAs and assures their capping by a cap-snatching mechanism, which involves the endonuclease activity cleaving the host capped pre-mRNAs. These short capped RNAs are then used as primers for viral transcription. Cleaves ssRNA substrates but not DNA. Seems to downregulate the expression of its own and heterologous mRNAs through its endonuclease activity. This Sin Nombre orthohantavirus (SNV) protein is RNA-directed RNA polymerase L.